Reading from the N-terminus, the 227-residue chain is UPF0173 metal-dependent hydrolase BCE_4747 (227 aa).

The protein belongs to the UPF0173 family.

The polypeptide is UPF0173 metal-dependent hydrolase BCE_4747 (Bacillus cereus (strain ATCC 10987 / NRS 248)).